We begin with the raw amino-acid sequence, 449 residues long: Glucose-6-phosphate isomerase (449 aa).

The active-site Proton donor is Glu291. Active-site residues include His312 and Lys426.

Belongs to the GPI family.

The protein localises to the cytoplasm. It catalyses the reaction alpha-D-glucose 6-phosphate = beta-D-fructose 6-phosphate. It functions in the pathway carbohydrate biosynthesis; gluconeogenesis. The protein operates within carbohydrate degradation; glycolysis; D-glyceraldehyde 3-phosphate and glycerone phosphate from D-glucose: step 2/4. Catalyzes the reversible isomerization of glucose-6-phosphate to fructose-6-phosphate. The chain is Glucose-6-phosphate isomerase from Streptococcus pyogenes serotype M3 (strain ATCC BAA-595 / MGAS315).